An 877-amino-acid chain; its full sequence is EF-hand domain-containing family member B (877 aa).

2 disordered regions span residues 1 to 47 (MCSF…GRKS) and 268 to 290 (AQQP…PDRI). EF-hand domains follow at residues 605-640 (QNFD…ACLH) and 641-676 (LDEK…KDKT). Ca(2+) is bound by residues D618, D622, E629, D654, D656, D658, and E665.

As to quaternary structure, microtubule inner protein component of sperm flagellar doublet microtubules. Interacts with STIM1 and ORAI1; the interactions take place upon Ca(2+)-store depletion and dissociate through a Ca(2+)-dependent mechanism. Interaction with STIM1 inhibits STIM1 interaction with SARAF. Expressed in trachea multiciliated cells.

Its subcellular location is the cytoplasm. The protein resides in the cytoskeleton. It localises to the cilium axoneme. The protein localises to the flagellum axoneme. Microtubule inner protein (MIP) part of the dynein-decorated doublet microtubules (DMTs) in cilia axoneme, which is required for motile cilia beating. Cytosolic sensor for calcium, modulates the interaction of STIM1 and ORAI1 upon store depletion and the activation of store-operated Ca(2+) entry (SOCE) and NFAT translocation from cytosol to nucleus. This Bos taurus (Bovine) protein is EF-hand domain-containing family member B.